Reading from the N-terminus, the 380-residue chain is uncharacterized protein (380 aa).

The next 9 membrane-spanning stretches (helical) occupy residues 15–35 (LFHP…LAFP), 45–65 (LFKI…PFIF), 75–95 (ILYL…FKIT), 98–118 (LFLS…FVKF), 123–143 (IFVD…VLIY), 182–202 (IIAF…MLFI), 217–237 (MVLL…IILL), 303–323 (GTIY…LGVI), and 341–361 (LLLA…LSLL).

The protein resides in the cell membrane. This is an uncharacterized protein from Methanocaldococcus jannaschii (strain ATCC 43067 / DSM 2661 / JAL-1 / JCM 10045 / NBRC 100440) (Methanococcus jannaschii).